A 165-amino-acid chain; its full sequence is Ubiquitin-conjugating enzyme E2 G2 (165 aa).

A2 carries the post-translational modification N-acetylalanine. In terms of domain architecture, UBC core spans 4–164 (TALKRLMAEY…AKQIVQKSLG (161 aa)). The Glycyl thioester intermediate role is filled by C89.

Belongs to the ubiquitin-conjugating enzyme family. Interacts with AUP1 (via C-terminus); the interaction recruits UBE2G2 to lipid droplets. Interacts with ubiquitin ligases AMFR/gp78 and RNF139/TRC8; recruitment to lipid droplets by AUP1 facilitates interaction of UBE2G2 with AMFR and RNF139, leading to sterol-induced ubiquitination of 3-hydroxy-3-methylglutaryl coenzyme A reductase and its subsequent proteasomal degradation.

It localises to the endoplasmic reticulum. The protein localises to the lipid droplet. The enzyme catalyses S-ubiquitinyl-[E1 ubiquitin-activating enzyme]-L-cysteine + [E2 ubiquitin-conjugating enzyme]-L-cysteine = [E1 ubiquitin-activating enzyme]-L-cysteine + S-ubiquitinyl-[E2 ubiquitin-conjugating enzyme]-L-cysteine.. It participates in protein modification; protein ubiquitination. In terms of biological role, accepts ubiquitin from the E1 complex and catalyzes its covalent attachment to other proteins. In vitro catalyzes 'Lys-48'-linked polyubiquitination. Involved in endoplasmic reticulum-associated degradation (ERAD). Required for sterol-induced ubiquitination of 3-hydroxy-3-methylglutaryl coenzyme A reductase and its subsequent proteasomal degradation. The polypeptide is Ubiquitin-conjugating enzyme E2 G2 (Homo sapiens (Human)).